The sequence spans 284 residues: 2-dehydro-3-deoxyphosphooctonate aldolase (284 aa).

It belongs to the KdsA family.

Its subcellular location is the cytoplasm. The catalysed reaction is D-arabinose 5-phosphate + phosphoenolpyruvate + H2O = 3-deoxy-alpha-D-manno-2-octulosonate-8-phosphate + phosphate. It functions in the pathway carbohydrate biosynthesis; 3-deoxy-D-manno-octulosonate biosynthesis; 3-deoxy-D-manno-octulosonate from D-ribulose 5-phosphate: step 2/3. Its pathway is bacterial outer membrane biogenesis; lipopolysaccharide biosynthesis. This chain is 2-dehydro-3-deoxyphosphooctonate aldolase, found in Escherichia coli O157:H7.